Here is a 154-residue protein sequence, read N- to C-terminus: UPF0225 protein Asuc_0343 (154 aa).

Belongs to the UPF0225 family.

This Actinobacillus succinogenes (strain ATCC 55618 / DSM 22257 / CCUG 43843 / 130Z) protein is UPF0225 protein Asuc_0343.